The primary structure comprises 545 residues: ATP synthase subunit alpha (545 aa).

173–180 (GDRQTGKT) is a binding site for ATP.

This sequence belongs to the ATPase alpha/beta chains family. As to quaternary structure, F-type ATPases have 2 components, CF(1) - the catalytic core - and CF(0) - the membrane proton channel. CF(1) has five subunits: alpha(3), beta(3), gamma(1), delta(1), epsilon(1). CF(0) has three main subunits: a(1), b(2) and c(9-12). The alpha and beta chains form an alternating ring which encloses part of the gamma chain. CF(1) is attached to CF(0) by a central stalk formed by the gamma and epsilon chains, while a peripheral stalk is formed by the delta and b chains.

The protein localises to the cell membrane. The catalysed reaction is ATP + H2O + 4 H(+)(in) = ADP + phosphate + 5 H(+)(out). In terms of biological role, produces ATP from ADP in the presence of a proton gradient across the membrane. The alpha chain is a regulatory subunit. This Paenarthrobacter aurescens (strain TC1) protein is ATP synthase subunit alpha.